Consider the following 330-residue polypeptide: Phosphate acyltransferase (330 aa).

The protein belongs to the PlsX family. In terms of assembly, homodimer. Probably interacts with PlsY.

The protein resides in the cytoplasm. The catalysed reaction is a fatty acyl-[ACP] + phosphate = an acyl phosphate + holo-[ACP]. It functions in the pathway lipid metabolism; phospholipid metabolism. Catalyzes the reversible formation of acyl-phosphate (acyl-PO(4)) from acyl-[acyl-carrier-protein] (acyl-ACP). This enzyme utilizes acyl-ACP as fatty acyl donor, but not acyl-CoA. In Lactobacillus delbrueckii subsp. bulgaricus (strain ATCC 11842 / DSM 20081 / BCRC 10696 / JCM 1002 / NBRC 13953 / NCIMB 11778 / NCTC 12712 / WDCM 00102 / Lb 14), this protein is Phosphate acyltransferase.